The sequence spans 290 residues: Proteasome subunit beta (290 aa).

The propeptide at 1–58 is removed in mature form; by autocatalysis; the sequence is MTTSGGLTGPGAFGRLPQPFHQPGITSFVEFLALQAPDLLPGRLQMPAGGQPPEVPHG. Thr59 (nucleophile) is an active-site residue.

It belongs to the peptidase T1B family. As to quaternary structure, the 20S proteasome core is composed of 14 alpha and 14 beta subunits that assemble into four stacked heptameric rings, resulting in a barrel-shaped structure. The two inner rings, each composed of seven catalytic beta subunits, are sandwiched by two outer rings, each composed of seven alpha subunits. The catalytic chamber with the active sites is on the inside of the barrel. Has a gated structure, the ends of the cylinder being occluded by the N-termini of the alpha-subunits. Is capped by the proteasome-associated ATPase, ARC.

The protein localises to the cytoplasm. The enzyme catalyses Cleavage of peptide bonds with very broad specificity.. It functions in the pathway protein degradation; proteasomal Pup-dependent pathway. Its activity is regulated as follows. The formation of the proteasomal ATPase ARC-20S proteasome complex, likely via the docking of the C-termini of ARC into the intersubunit pockets in the alpha-rings, may trigger opening of the gate for substrate entry. Interconversion between the open-gate and close-gate conformations leads to a dynamic regulation of the 20S proteasome proteolysis activity. Functionally, component of the proteasome core, a large protease complex with broad specificity involved in protein degradation. The protein is Proteasome subunit beta of Acidothermus cellulolyticus (strain ATCC 43068 / DSM 8971 / 11B).